Here is a 467-residue protein sequence, read N- to C-terminus: Acyl-CoA-binding domain-containing protein 5 (467 aa).

Positions 8–97 (HQTRFEAAVS…MKKIIETMPV (90 aa)) constitute an ACB domain. Residues 19 to 28 (IQSLPKNGSF), 39 to 43 (YSFYK), lysine 65, and tyrosine 84 each bind an acyl-CoA. Disordered stretches follow at residues 119 to 204 (KHGR…IVLN), 219 to 240 (TPLP…EGEP), and 304 to 376 (ITEN…DRGP). Polar residues predominate over residues 125–139 (GVTSELGSVLTSTPN). Acidic residues predominate over residues 170–187 (DEEDEEDETEHSEEEEKE). 2 stretches are compositionally biased toward basic and acidic residues: residues 312–322 (ELKDGGEDGKQ) and 335–347 (KSEH…ERSL). Positions 352–372 (GGEGSRSGQIGSSGDGDGWGS) are enriched in gly residues. The stretch at 382–411 (EQIAVVLMRLQEDMQNVLQRLHSLEVQTAS) forms a coiled coil. The chain crosses the membrane as a helical span at residues 439–459 (GTLALAVVWPFVVHWLMHVFL).

This sequence belongs to the ATG37 family.

Its subcellular location is the peroxisome membrane. Acyl-CoA binding protein which acts as the peroxisome receptor for pexophagy but is dispensable for aggrephagy and nonselective autophagy. Binds medium- and long-chain acyl-CoA esters. This Xenopus laevis (African clawed frog) protein is Acyl-CoA-binding domain-containing protein 5 (acbd5).